The chain runs to 418 residues: 26S proteasome regulatory subunit 6B (418 aa).

Met-1 carries the N-acetylmethionine modification. The residue at position 21 (Ser-21) is a Phosphoserine. Thr-25 carries the phosphothreonine modification. Residue Ser-28 is modified to Phosphoserine. 206–213 lines the ATP pocket; it reads GPPGCGKT. N6-acetyllysine is present on residues Lys-397 and Lys-401.

This sequence belongs to the AAA ATPase family. In terms of assembly, component of the 19S proteasome regulatory particle complex. The 26S proteasome consists of a 20S core particle (CP) and two 19S regulatory subunits (RP). The regulatory particle is made of a lid composed of 9 subunits, a base containing 6 ATPases including PSMC4 and few additional components. Interacts with NR1I3. Interacts with PAAF1. Interacts with TRIM5. Interacts with ZFAND1.

It localises to the cytoplasm. Its subcellular location is the nucleus. Its function is as follows. Component of the 26S proteasome, a multiprotein complex involved in the ATP-dependent degradation of ubiquitinated proteins. This complex plays a key role in the maintenance of protein homeostasis by removing misfolded or damaged proteins, which could impair cellular functions, and by removing proteins whose functions are no longer required. Therefore, the proteasome participates in numerous cellular processes, including cell cycle progression, apoptosis, or DNA damage repair. PSMC4 belongs to the heterohexameric ring of AAA (ATPases associated with diverse cellular activities) proteins that unfolds ubiquitinated target proteins that are concurrently translocated into a proteolytic chamber and degraded into peptides. This is 26S proteasome regulatory subunit 6B (Psmc4) from Mus musculus (Mouse).